Consider the following 109-residue polypeptide: C-X-C motif chemokine 13 (109 aa).

An N-terminal signal peptide occupies residues 1-22 (MKFISTSLLLMLLVSSLSPVQG). Intrachain disulfides connect cysteine 33–cysteine 60 and cysteine 35–cysteine 76.

It belongs to the intercrine alpha (chemokine CxC) family. In terms of tissue distribution, highest levels in liver, followed by spleen, lymph node, appendix and stomach. Low levels in salivary gland, mammary gland and fetal spleen.

It localises to the secreted. In terms of biological role, chemotactic for B-lymphocytes but not for T-lymphocytes, monocytes and neutrophils. Does not induce calcium release in B-lymphocytes. Binds to BLR1/CXCR5. This chain is C-X-C motif chemokine 13 (CXCL13), found in Homo sapiens (Human).